The primary structure comprises 336 residues: Phospholipase A1 (336 aa).

The N-terminal stretch at 1–27 is a signal peptide; that stretch reads MEENMNLKYLLLFVYFVQVLNCCYGHG. The propeptide occupies 28-36; sequence DPLSYELDR. A disulfide bond links Cys-40 and Cys-123. The Nucleophile role is filled by Ser-173. Asp-201 acts as the Charge relay system in catalysis. 2 cysteine pairs are disulfide-bonded: Cys-212/Cys-217 and Cys-255/Cys-263. Catalysis depends on His-265, which acts as the Charge relay system. 3 disulfide bridges follow: Cys-280–Cys-304, Cys-281–Cys-329, and Cys-297–Cys-302.

The protein belongs to the AB hydrolase superfamily. Lipase family. Expressed by the venom gland.

It localises to the secreted. It carries out the reaction a 1,2-diacyl-sn-glycero-3-phosphocholine + H2O = a 2-acyl-sn-glycero-3-phosphocholine + a fatty acid + H(+). Its function is as follows. Catalyzes the hydrolysis of phosphatidylcholine with phospholipase A1 activity. Induces hemolytic activity. Acts as an allergen. The polypeptide is Phospholipase A1 (Vespula vulgaris (Yellow jacket)).